The following is a 376-amino-acid chain: Cysteine synthase 1 (376 aa).

A mitochondrion-targeting transit peptide spans 1-16 (MFRHGVRTFATTSLRR). Lys-79 is subject to N6-(pyridoxal phosphate)lysine. Pyridoxal 5'-phosphate-binding positions include Asn-109, 215–219 (GTGGT), and Ser-314.

This sequence belongs to the cysteine synthase/cystathionine beta-synthase family. Requires pyridoxal 5'-phosphate as cofactor.

It localises to the mitochondrion. It carries out the reaction O-succinyl-L-serine + hydrogen sulfide = L-cysteine + succinate. It catalyses the reaction O-acetyl-L-serine + hydrogen sulfide = L-cysteine + acetate. It functions in the pathway amino-acid biosynthesis; L-cysteine biosynthesis; L-cysteine from L-serine: step 2/2. Its function is as follows. Catalyzes the conversion of O-succinyl-L-serine into cysteine, the last step in the cysteine biosynthesis pathway. Can also use O-acetyl-L-serine. The polypeptide is Cysteine synthase 1 (cys-17) (Neurospora crassa (strain ATCC 24698 / 74-OR23-1A / CBS 708.71 / DSM 1257 / FGSC 987)).